A 520-amino-acid polypeptide reads, in one-letter code: Protein nucleotidyltransferase YdiU (520 aa).

Positions 108, 110, 111, 130, 142, 143, 193, and 200 each coordinate ATP. D269 functions as the Proton acceptor in the catalytic mechanism. Residues N270 and D279 each coordinate Mg(2+). D279 is a binding site for ATP.

It belongs to the SELO family. The cofactor is Mg(2+). Mn(2+) is required as a cofactor.

It catalyses the reaction L-seryl-[protein] + ATP = 3-O-(5'-adenylyl)-L-seryl-[protein] + diphosphate. The catalysed reaction is L-threonyl-[protein] + ATP = 3-O-(5'-adenylyl)-L-threonyl-[protein] + diphosphate. The enzyme catalyses L-tyrosyl-[protein] + ATP = O-(5'-adenylyl)-L-tyrosyl-[protein] + diphosphate. It carries out the reaction L-histidyl-[protein] + UTP = N(tele)-(5'-uridylyl)-L-histidyl-[protein] + diphosphate. It catalyses the reaction L-seryl-[protein] + UTP = O-(5'-uridylyl)-L-seryl-[protein] + diphosphate. The catalysed reaction is L-tyrosyl-[protein] + UTP = O-(5'-uridylyl)-L-tyrosyl-[protein] + diphosphate. Its function is as follows. Nucleotidyltransferase involved in the post-translational modification of proteins. It can catalyze the addition of adenosine monophosphate (AMP) or uridine monophosphate (UMP) to a protein, resulting in modifications known as AMPylation and UMPylation. The chain is Protein nucleotidyltransferase YdiU from Cupriavidus pinatubonensis (strain JMP 134 / LMG 1197) (Cupriavidus necator (strain JMP 134)).